A 319-amino-acid polypeptide reads, in one-letter code: Thiamine pyrophosphokinase (319 aa).

Position 2 is an N-acetylserine (Ser-2).

The protein belongs to the thiamine pyrophosphokinase family. Homodimer.

The enzyme catalyses thiamine + ATP = thiamine diphosphate + AMP + H(+). It functions in the pathway cofactor biosynthesis; thiamine diphosphate biosynthesis; thiamine diphosphate from thiamine: step 1/1. Functionally, essential protein, it is the only enzyme in yeast capable of synthesizing thiamine pyrophosphate (TPP). In Saccharomyces cerevisiae (strain ATCC 204508 / S288c) (Baker's yeast), this protein is Thiamine pyrophosphokinase.